The following is a 322-amino-acid chain: Secreted effector protein SseI (322 aa).

As to quaternary structure, interacts with host IQGAP1 and host TRIP6 (thyroid receptor-interacting protein 6).

It is found in the secreted. It localises to the host cytoplasm. In terms of biological role, effector proteins function to alter host cell physiology and promote bacterial survival in host tissues. This protein is required to maintain a long-term chronic systemic infection in mice. It inhibits normal cell migration of primary macrophages and dendritic cells, by a mechanism that involves interaction with the host factor IQGAP1, an important regulator of the cytoskeleton and cell migration. Also accelerates the systemic spread of infection from the gastrointestinal tract to the bloodstream, probably by interacting with host TRIP6. The sequence is that of Secreted effector protein SseI (sseI) from Salmonella typhimurium (strain LT2 / SGSC1412 / ATCC 700720).